A 314-amino-acid polypeptide reads, in one-letter code: Homoserine O-acetyltransferase (314 aa).

Cys142 (acyl-thioester intermediate) is an active-site residue. Substrate contacts are provided by Lys163 and Ser192. His235 (proton acceptor) is an active-site residue. Glu237 is a catalytic residue. Arg249 serves as a coordination point for substrate.

This sequence belongs to the MetA family.

It is found in the cytoplasm. The enzyme catalyses L-homoserine + acetyl-CoA = O-acetyl-L-homoserine + CoA. Its pathway is amino-acid biosynthesis; L-methionine biosynthesis via de novo pathway; O-acetyl-L-homoserine from L-homoserine: step 1/1. In terms of biological role, transfers an acetyl group from acetyl-CoA to L-homoserine, forming acetyl-L-homoserine. The protein is Homoserine O-acetyltransferase of Streptococcus thermophilus (strain ATCC BAA-250 / LMG 18311).